The chain runs to 260 residues: Putative serine protease 45 (260 aa).

The region spanning M1–S234 is the Peptidase S1 domain. Cysteines 19 and 35 form a disulfide. H34 functions as the Charge relay system in the catalytic mechanism. A glycan (N-linked (GlcNAc...) asparagine) is linked at N55. The Charge relay system role is filled by D82. 3 cysteine pairs are disulfide-bonded: C116–C192, C151–C173, and C182–C210. Residue S186 is the Charge relay system of the active site.

It belongs to the peptidase S1 family.

The chain is Putative serine protease 45 from Homo sapiens (Human).